Reading from the N-terminus, the 21-residue chain is Granulitoxin (21 aa).

The interval 1 to 21 (AKTGILDSDGPTVAGNSLSGT) is disordered.

It is found in the secreted. Its subcellular location is the nematocyst. In terms of biological role, injection into mice produces severe neurotoxic effects such as circular movements, aggressive behavior, dyspnea, tonic-clonic convulsion and death. The chain is Granulitoxin from Bunodosoma cangicum (Sea anemone).